Reading from the N-terminus, the 258-residue chain is Insulin-like growth factor-binding protein 4 (258 aa).

Residues 1–21 form the signal peptide; that stretch reads MLSLCLMAALLLAAGPGPSLG. Residues 23–103 form the IGFBP N-terminal domain; that stretch reads EAIHCPPCSE…VHGQGVCMEL (81 aa). Cystine bridges form between Cys-27–Cys-53, Cys-30–Cys-55, Cys-38–Cys-56, Cys-44–Cys-59, Cys-67–Cys-80, and Cys-74–Cys-100. N-linked (GlcNAc...) asparagine glycosylation is present at Asn-125. Cystine bridges form between Cys-131-Cys-138, Cys-174-Cys-204, Cys-215-Cys-226, and Cys-228-Cys-249. The region spanning 171–249 is the Thyroglobulin type-1 domain; the sequence is QGSCQSELHR…GLEPKGELDC (79 aa). Residue Ser-255 is modified to Phosphoserine.

In terms of assembly, binds IGF2 more than IGF1.

Its subcellular location is the secreted. Functionally, IGF-binding proteins prolong the half-life of the IGFs and have been shown to either inhibit or stimulate the growth promoting effects of the IGFs on cell culture. They alter the interaction of IGFs with their cell surface receptors. This chain is Insulin-like growth factor-binding protein 4 (IGFBP4), found in Bos taurus (Bovine).